Consider the following 435-residue polypeptide: Ribosomal protein uS12 methylthiotransferase RimO (435 aa).

The region spanning 2–118 (KKFHIVKLGC…IVEKIENGEY (117 aa)) is the MTTase N-terminal domain. Residues Cys-11, Cys-47, Cys-81, Cys-150, Cys-154, and Cys-157 each contribute to the [4Fe-4S] cluster site. One can recognise a Radical SAM core domain in the interval 136-364 (IPDSHYAYVK…MTVQSEISKN (229 aa)). The TRAM domain occupies 367 to 435 (EKYIGETLEV…EYDLEGEIVE (69 aa)).

It belongs to the methylthiotransferase family. RimO subfamily. [4Fe-4S] cluster is required as a cofactor.

The protein resides in the cytoplasm. The enzyme catalyses L-aspartate(89)-[ribosomal protein uS12]-hydrogen + (sulfur carrier)-SH + AH2 + 2 S-adenosyl-L-methionine = 3-methylsulfanyl-L-aspartate(89)-[ribosomal protein uS12]-hydrogen + (sulfur carrier)-H + 5'-deoxyadenosine + L-methionine + A + S-adenosyl-L-homocysteine + 2 H(+). In terms of biological role, catalyzes the methylthiolation of an aspartic acid residue of ribosomal protein uS12. The protein is Ribosomal protein uS12 methylthiotransferase RimO of Petrotoga mobilis (strain DSM 10674 / SJ95).